Here is a 531-residue protein sequence, read N- to C-terminus: PHD finger protein 21B (531 aa).

Disordered regions lie at residues 79-99 (PDSL…PTFQ), 184-222 (SADN…SLSP), 238-277 (VQTQ…ENPE), and 295-314 (EIQS…PAYS). The span at 265-277 (KKEDRPPTQENPE) shows a compositional bias: basic and acidic residues. A PHD-type zinc finger spans residues 352–399 (DEHCAACKRGANLQPCGTCPGAYHLSCLEPPLKTAPKGVWVCPRCQQK). Residues 423–465 (KTVKEEEKQKLLQRGSELQNEHQQLEERDRRLASAVQKCLELK) are a coiled coil. Residues 507–531 (LLAGPWTKPSVAATHPTVQHPQGHN) are disordered. The segment covering 522–531 (PTVQHPQGHN) has biased composition (polar residues).

This Homo sapiens (Human) protein is PHD finger protein 21B (PHF21B).